A 302-amino-acid polypeptide reads, in one-letter code: NAD kinase 2 (302 aa).

Asp-78 (proton acceptor) is an active-site residue. NAD(+) is bound by residues 78–79 (DG), 152–153 (NE), Asp-182, 193–198 (TAYALS), and Ala-217.

Belongs to the NAD kinase family. It depends on a divalent metal cation as a cofactor.

It localises to the cytoplasm. The enzyme catalyses NAD(+) + ATP = ADP + NADP(+) + H(+). Involved in the regulation of the intracellular balance of NAD and NADP, and is a key enzyme in the biosynthesis of NADP. Catalyzes specifically the phosphorylation on 2'-hydroxyl of the adenosine moiety of NAD to yield NADP. This Prochlorococcus marinus (strain MIT 9313) protein is NAD kinase 2.